The sequence spans 165 residues: SsrA-binding protein (165 aa).

The segment at 141-165 (KLHDKRQDEKRKQADREVKSALARY) is disordered. A compositionally biased stretch (basic and acidic residues) spans 145–159 (KRQDEKRKQADREVK).

Belongs to the SmpB family.

It is found in the cytoplasm. Its function is as follows. Required for rescue of stalled ribosomes mediated by trans-translation. Binds to transfer-messenger RNA (tmRNA), required for stable association of tmRNA with ribosomes. tmRNA and SmpB together mimic tRNA shape, replacing the anticodon stem-loop with SmpB. tmRNA is encoded by the ssrA gene; the 2 termini fold to resemble tRNA(Ala) and it encodes a 'tag peptide', a short internal open reading frame. During trans-translation Ala-aminoacylated tmRNA acts like a tRNA, entering the A-site of stalled ribosomes, displacing the stalled mRNA. The ribosome then switches to translate the ORF on the tmRNA; the nascent peptide is terminated with the 'tag peptide' encoded by the tmRNA and targeted for degradation. The ribosome is freed to recommence translation, which seems to be the essential function of trans-translation. The protein is SsrA-binding protein of Prochlorococcus marinus (strain MIT 9313).